A 228-amino-acid polypeptide reads, in one-letter code: 5'-methylthioadenosine/S-adenosylhomocysteine nucleosidase (228 aa).

Residue glutamate 11 is the Proton acceptor of the active site. Substrate contacts are provided by residues glycine 77, isoleucine 151, and 172–173 (ME). The Proton donor role is filled by aspartate 196.

The protein belongs to the PNP/UDP phosphorylase family. MtnN subfamily.

It carries out the reaction S-adenosyl-L-homocysteine + H2O = S-(5-deoxy-D-ribos-5-yl)-L-homocysteine + adenine. It catalyses the reaction S-methyl-5'-thioadenosine + H2O = 5-(methylsulfanyl)-D-ribose + adenine. The catalysed reaction is 5'-deoxyadenosine + H2O = 5-deoxy-D-ribose + adenine. It functions in the pathway amino-acid biosynthesis; L-methionine biosynthesis via salvage pathway; S-methyl-5-thio-alpha-D-ribose 1-phosphate from S-methyl-5'-thioadenosine (hydrolase route): step 1/2. Functionally, catalyzes the irreversible cleavage of the glycosidic bond in both 5'-methylthioadenosine (MTA) and S-adenosylhomocysteine (SAH/AdoHcy) to adenine and the corresponding thioribose, 5'-methylthioribose and S-ribosylhomocysteine, respectively. Also cleaves 5'-deoxyadenosine, a toxic by-product of radical S-adenosylmethionine (SAM) enzymes, into 5-deoxyribose and adenine. This Staphylococcus aureus (strain bovine RF122 / ET3-1) protein is 5'-methylthioadenosine/S-adenosylhomocysteine nucleosidase.